We begin with the raw amino-acid sequence, 107 residues long: Benzene 1,2-dioxygenase system ferredoxin subunit (107 aa).

One can recognise a Rieske domain in the interval 4 to 99 (TYILRQSDLP…IKVEGDEVHV (96 aa)). Residues Cys-43, His-45, Cys-62, and His-65 each contribute to the [2Fe-2S] cluster site.

Belongs to the bacterial ring-hydroxylating dioxygenase ferredoxin component family. In terms of assembly, this dioxygenase system consists of four proteins: the two subunits of the hydroxylase component (BnzA and BnzB), a ferredoxin (BnzC) and a ferredoxin reductase (BnzD).

The protein operates within aromatic compound metabolism; benzene degradation; catechol from benzene: step 1/2. This protein seems to be a 2Fe-2S ferredoxin. This Pseudomonas putida (Arthrobacter siderocapsulatus) protein is Benzene 1,2-dioxygenase system ferredoxin subunit (bnzC).